A 521-amino-acid chain; its full sequence is Maturase K (521 aa).

It belongs to the intron maturase 2 family. MatK subfamily.

The protein resides in the plastid. It localises to the chloroplast. Usually encoded in the trnK tRNA gene intron. Probably assists in splicing its own and other chloroplast group II introns. This is Maturase K from Trillium catesbaei (Catesby's trillium).